The primary structure comprises 328 residues: Glyoxylate reductase/hydroxypyruvate reductase (328 aa).

At Ser-36 the chain carries Phosphoserine. 83-84 (VG) is a substrate binding site. Residues 162 to 164 (GRI), 185 to 188 (RQPR), Ser-217, and Ile-243 contribute to the NADP(+) site. Residues Arg-245, Asp-269, and 293 to 296 (HIGS) each bind substrate. The Proton donor role is filled by His-293. NADP(+) is bound at residue Gly-295. Phosphothreonine is present on Thr-298.

Belongs to the D-isomer specific 2-hydroxyacid dehydrogenase family. In terms of assembly, homodimer.

The enzyme catalyses glycolate + NADP(+) = glyoxylate + NADPH + H(+). The catalysed reaction is (R)-glycerate + NAD(+) = 3-hydroxypyruvate + NADH + H(+). It catalyses the reaction (R)-glycerate + NADP(+) = 3-hydroxypyruvate + NADPH + H(+). Functionally, enzyme with hydroxy-pyruvate reductase, glyoxylate reductase and D-glycerate dehydrogenase enzymatic activities. Reduces hydroxypyruvate to D-glycerate, glyoxylate to glycolate oxidizes D-glycerate to hydroxypyruvate. The sequence is that of Glyoxylate reductase/hydroxypyruvate reductase (Grhpr) from Mus musculus (Mouse).